Consider the following 207-residue polypeptide: rRNA N(6)-adenosine-methyltransferase METTL5 (207 aa).

Residues Q25, T28, G56, C59, V61, D78, and 105–106 each bind S-adenosyl-L-methionine; that span reads DV.

The protein belongs to the methyltransferase superfamily. PrmA family.

The protein resides in the nucleus. It is found in the presynapse. The protein localises to the postsynapse. It catalyses the reaction adenosine(1832) in 18S rRNA + S-adenosyl-L-methionine = N(6)-methyladenosine(1832) in 18S rRNA + S-adenosyl-L-homocysteine + H(+). Its activity is regulated as follows. rRNA N6-adenosine-methyltransferase activity is inhibited by zinc. Catalytic subunit of a heterodimer with TRMT112, which specifically methylates the 6th position of adenine in position 1832 of 18S rRNA. N6-methylation of adenine(1832) in 18S rRNA resides in the decoding center of 18S rRNA and is required for translation and embryonic stem cells (ESCs) pluripotency and differentiation. In Danio rerio (Zebrafish), this protein is rRNA N(6)-adenosine-methyltransferase METTL5.